A 301-amino-acid polypeptide reads, in one-letter code: Putative S-adenosyl-L-methionine-dependent methyltransferase MAP_3777 (301 aa).

Residues Asp-126 and 155–156 (DL) each bind S-adenosyl-L-methionine.

It belongs to the UPF0677 family.

Its function is as follows. Exhibits S-adenosyl-L-methionine-dependent methyltransferase activity. In Mycolicibacterium paratuberculosis (strain ATCC BAA-968 / K-10) (Mycobacterium paratuberculosis), this protein is Putative S-adenosyl-L-methionine-dependent methyltransferase MAP_3777.